The chain runs to 153 residues: MKTKSNLIIISIFLIDFFTKKWILNNYEIFDSIKIFPMIKITYIRNYGIALGLFQSYSNLIRILIIVISIFILLFIFYMKNLCKDLLSNLGYSIIIGGSFGNIFDRIFYGSVIDFIDIYIYKWHFPVFNFADISIFIGFLILIYNKKIFIVNT.

The next 3 membrane-spanning stretches (helical) occupy residues 7 to 27, 59 to 79, and 93 to 113; these read LIIISIFLIDFFTKKWILNNY, NLIRILIIVISIFILLFIFYM, and SIIIGGSFGNIFDRIFYGSVI. Catalysis depends on residues Asp-114 and Asp-132. The helical transmembrane segment at 123–143 threads the bilayer; sequence WHFPVFNFADISIFIGFLILI.

It belongs to the peptidase A8 family.

It is found in the cell membrane. It catalyses the reaction Release of signal peptides from bacterial membrane prolipoproteins. Hydrolyzes -Xaa-Yaa-Zaa-|-(S,diacylglyceryl)Cys-, in which Xaa is hydrophobic (preferably Leu), and Yaa (Ala or Ser) and Zaa (Gly or Ala) have small, neutral side chains.. The protein operates within protein modification; lipoprotein biosynthesis (signal peptide cleavage). In terms of biological role, this protein specifically catalyzes the removal of signal peptides from prolipoproteins. The polypeptide is Lipoprotein signal peptidase (Wigglesworthia glossinidia brevipalpis).